The following is a 20-amino-acid chain: GYLDYDEVDDNRAKLPLDAR.

Residue Tyr-5 is modified to Sulfotyrosine.

In terms of assembly, heterohexamer; disulfide linked. Contains 2 sets of 3 non-identical chains (alpha, beta and gamma). The 2 heterotrimers are in head to head conformation with the N-termini in a small central domain. Conversion of fibrinogen to fibrin is triggered by thrombin, which cleaves fibrinopeptides A and B from alpha and beta chains, and thus exposes the N-terminal polymerization sites responsible for the formation of the soft clot.

It localises to the secreted. Functionally, cleaved by the protease thrombin to yield monomers which, together with fibrinogen alpha (FGA) and fibrinogen gamma (FGG), polymerize to form an insoluble fibrin matrix. Fibrin has a major function in hemostasis as one of the primary components of blood clots. In addition, functions during the early stages of wound repair to stabilize the lesion and guide cell migration during re-epithelialization. Was originally thought to be essential for platelet aggregation, based on in vitro studies using anticoagulated blood. However subsequent studies have shown that it is not absolutely required for thrombus formation in vivo. Enhances expression of SELP in activated platelets. Maternal fibrinogen is essential for successful pregnancy. Fibrin deposition is also associated with infection, where it protects against IFNG-mediated hemorrhage. May also facilitate the antibacterial immune response via both innate and T-cell mediated pathways. The chain is Fibrinogen beta chain (FGB) from Capra hircus (Goat).